Here is a 511-residue protein sequence, read N- to C-terminus: Bifunctional purine biosynthesis protein PurH (511 aa).

Positions 1–145 (MKKRALVSVS…KNHKFVSVIV (145 aa)) constitute an MGS-like domain.

It belongs to the PurH family.

The catalysed reaction is (6R)-10-formyltetrahydrofolate + 5-amino-1-(5-phospho-beta-D-ribosyl)imidazole-4-carboxamide = 5-formamido-1-(5-phospho-D-ribosyl)imidazole-4-carboxamide + (6S)-5,6,7,8-tetrahydrofolate. It carries out the reaction IMP + H2O = 5-formamido-1-(5-phospho-D-ribosyl)imidazole-4-carboxamide. The protein operates within purine metabolism; IMP biosynthesis via de novo pathway; 5-formamido-1-(5-phospho-D-ribosyl)imidazole-4-carboxamide from 5-amino-1-(5-phospho-D-ribosyl)imidazole-4-carboxamide (10-formyl THF route): step 1/1. It functions in the pathway purine metabolism; IMP biosynthesis via de novo pathway; IMP from 5-formamido-1-(5-phospho-D-ribosyl)imidazole-4-carboxamide: step 1/1. This Bacillus cytotoxicus (strain DSM 22905 / CIP 110041 / 391-98 / NVH 391-98) protein is Bifunctional purine biosynthesis protein PurH.